The chain runs to 241 residues: Probable transcriptional regulatory protein str0195 (241 aa).

Belongs to the TACO1 family. YeeN subfamily.

Its subcellular location is the cytoplasm. The sequence is that of Probable transcriptional regulatory protein str0195 from Streptococcus thermophilus (strain CNRZ 1066).